The primary structure comprises 649 residues: DNA mismatch repair protein MutL (649 aa).

Belongs to the DNA mismatch repair MutL/HexB family.

Functionally, this protein is involved in the repair of mismatches in DNA. It is required for dam-dependent methyl-directed DNA mismatch repair. May act as a 'molecular matchmaker', a protein that promotes the formation of a stable complex between two or more DNA-binding proteins in an ATP-dependent manner without itself being part of a final effector complex. This chain is DNA mismatch repair protein MutL, found in Streptococcus pneumoniae (strain P1031).